Here is a 279-residue protein sequence, read N- to C-terminus: Oxygen-dependent coproporphyrinogen-III oxidase (279 aa).

Position 102 (serine 102) interacts with substrate. A divalent metal cation contacts are provided by histidine 106 and histidine 116. The active-site Proton donor is histidine 116. 118–120 provides a ligand contact to substrate; it reads NTR. The a divalent metal cation site is built by histidine 149 and histidine 179. The tract at residues 244 to 279 is important for dimerization; the sequence is YVEFNLLYDRGTKFGLMTDGNVEAILMSLPPEVKFN.

This sequence belongs to the aerobic coproporphyrinogen-III oxidase family. As to quaternary structure, homodimer. It depends on a divalent metal cation as a cofactor.

It is found in the cytoplasm. The enzyme catalyses coproporphyrinogen III + O2 + 2 H(+) = protoporphyrinogen IX + 2 CO2 + 2 H2O. The protein operates within porphyrin-containing compound metabolism; protoporphyrin-IX biosynthesis; protoporphyrinogen-IX from coproporphyrinogen-III (O2 route): step 1/1. Its function is as follows. Involved in the heme biosynthesis. Catalyzes the aerobic oxidative decarboxylation of propionate groups of rings A and B of coproporphyrinogen-III to yield the vinyl groups in protoporphyrinogen-IX. The protein is Oxygen-dependent coproporphyrinogen-III oxidase of Rickettsia conorii (strain ATCC VR-613 / Malish 7).